Here is a 312-residue protein sequence, read N- to C-terminus: Beta-ketoacyl-[acyl-carrier-protein] synthase III (312 aa).

Residues Cys-112 and His-237 contribute to the active site. The interval 238–242 is ACP-binding; the sequence is QANIR. Residue Asn-267 is part of the active site.

Belongs to the thiolase-like superfamily. FabH family. Homodimer.

It localises to the cytoplasm. The catalysed reaction is malonyl-[ACP] + acetyl-CoA + H(+) = 3-oxobutanoyl-[ACP] + CO2 + CoA. Its pathway is lipid metabolism; fatty acid biosynthesis. Functionally, catalyzes the condensation reaction of fatty acid synthesis by the addition to an acyl acceptor of two carbons from malonyl-ACP. Catalyzes the first condensation reaction which initiates fatty acid synthesis and may therefore play a role in governing the total rate of fatty acid production. Possesses both acetoacetyl-ACP synthase and acetyl transacylase activities. Its substrate specificity determines the biosynthesis of branched-chain and/or straight-chain of fatty acids. The protein is Beta-ketoacyl-[acyl-carrier-protein] synthase III of Listeria innocua serovar 6a (strain ATCC BAA-680 / CLIP 11262).